We begin with the raw amino-acid sequence, 310 residues long: ATP-dependent protease (310 aa).

One can recognise an Integrase catalytic domain in the interval 24-186 (RLNQCFFKFK…TPNQKEENYF (163 aa)).

The polypeptide is ATP-dependent protease (Lactococcus lactis subsp. lactis (Streptococcus lactis)).